The following is a 397-amino-acid chain: 2,3-bisphosphoglycerate-independent phosphoglycerate mutase (397 aa).

This sequence belongs to the BPG-independent phosphoglycerate mutase family. A-PGAM subfamily.

It catalyses the reaction (2R)-2-phosphoglycerate = (2R)-3-phosphoglycerate. The protein operates within carbohydrate degradation; glycolysis; pyruvate from D-glyceraldehyde 3-phosphate: step 3/5. Its function is as follows. Catalyzes the interconversion of 2-phosphoglycerate and 3-phosphoglycerate. The protein is 2,3-bisphosphoglycerate-independent phosphoglycerate mutase (apgM) of Methanosarcina mazei (strain ATCC BAA-159 / DSM 3647 / Goe1 / Go1 / JCM 11833 / OCM 88) (Methanosarcina frisia).